A 1203-amino-acid polypeptide reads, in one-letter code: DNA-directed RNA polymerase I subunit RPA135 (1203 aa).

The residue at position 2 (S2) is an N-acetylserine. S81 bears the Phosphoserine mark. The C4-type zinc-finger motif lies at 1104–1131; that stretch reads CRECGSILTTQQSVPRIGSISTVCCRRC. A Phosphoserine modification is found at S1156.

The protein belongs to the RNA polymerase beta chain family. In terms of assembly, component of the RNA polymerase I (Pol I) complex consisting of 14 subunits: RPA135, RPA190, RPC40, RPA14, RPB5, RPO26, RPA43, RPB8, RPA12, RPB10, RPC19, RPC10, RPA49 and RPA34. The complex is composed of a horseshoe-shaped core containing ten subunits (RPA135, RPA190, RPB5, RPO26, RPB8, RPB10, RPC10, RPA12, RPC19 and RPC40) where RPA135 and RPA190 form the DNA-binding cleft. Outside of the core, RPA14 and RPA43 form the stalk that mediates interactions with transcription initiation factors and newly synthesized RNA.

Its subcellular location is the nucleus. The protein resides in the nucleolus. The catalysed reaction is RNA(n) + a ribonucleoside 5'-triphosphate = RNA(n+1) + diphosphate. In terms of biological role, DNA-dependent RNA polymerases catalyze the transcription of DNA into RNA using the four ribonucleoside triphosphates as substrates. Component of RNA polymerase I (Pol I) which synthesizes ribosomal RNA precursors. Besides, RNA polymerase I has intrinsic RNA cleavage activity. RPA190 and RPA135 both contribute to the polymerase catalytic activity and together form the Pol I active center. In addition, subunit RPA12 contributes a catalytic zinc ribbon that is required for RNA cleavage by Pol I. A single stranded DNA template strand of the promoter is positioned within the central active site cleft of Pol I. A bridging helix emanates from RPA190 and crosses the cleft near the catalytic site and is thought to promote translocation of Pol I by acting as a ratchet that moves the RNA-DNA hybrid through the active site by switching from straight to bent conformations at each step of nucleotide addition. The polypeptide is DNA-directed RNA polymerase I subunit RPA135 (RPA135) (Saccharomyces cerevisiae (strain ATCC 204508 / S288c) (Baker's yeast)).